A 95-amino-acid chain; its full sequence is Aspartyl/glutamyl-tRNA(Asn/Gln) amidotransferase subunit C (95 aa).

It belongs to the GatC family. In terms of assembly, heterotrimer of A, B and C subunits.

It catalyses the reaction L-glutamyl-tRNA(Gln) + L-glutamine + ATP + H2O = L-glutaminyl-tRNA(Gln) + L-glutamate + ADP + phosphate + H(+). The catalysed reaction is L-aspartyl-tRNA(Asn) + L-glutamine + ATP + H2O = L-asparaginyl-tRNA(Asn) + L-glutamate + ADP + phosphate + 2 H(+). Allows the formation of correctly charged Asn-tRNA(Asn) or Gln-tRNA(Gln) through the transamidation of misacylated Asp-tRNA(Asn) or Glu-tRNA(Gln) in organisms which lack either or both of asparaginyl-tRNA or glutaminyl-tRNA synthetases. The reaction takes place in the presence of glutamine and ATP through an activated phospho-Asp-tRNA(Asn) or phospho-Glu-tRNA(Gln). The sequence is that of Aspartyl/glutamyl-tRNA(Asn/Gln) amidotransferase subunit C from Pseudomonas putida (strain ATCC 700007 / DSM 6899 / JCM 31910 / BCRC 17059 / LMG 24140 / F1).